The sequence spans 195 residues: Pyruvoyl-dependent arginine decarboxylase AaxB (195 aa).

Serine 53 is modified (pyruvic acid (Ser)).

It belongs to the pyruvoyl-dependent arginine decarboxylase family. As to quaternary structure, trimer of an alpha-beta dimer. Requires pyruvate as cofactor.

It localises to the cytoplasm. The catalysed reaction is L-arginine + H(+) = agmatine + CO2. Part of the AaxABC system, catalyzes the decarboxylation of L-arginine. The arginine uptake by the bacterium in the macrophage may be a virulence factor against the host innate immune response. This chain is Pyruvoyl-dependent arginine decarboxylase AaxB (aaxB), found in Chlamydia abortus (strain DSM 27085 / S26/3) (Chlamydophila abortus).